The following is a 160-amino-acid chain: Lipoprotein signal peptidase (160 aa).

3 consecutive transmembrane segments (helical) span residues Ile-13–Ile-33, Trp-72–Leu-92, and Ser-104–Val-124. Catalysis depends on residues Asp-125 and Asp-143. A helical transmembrane segment spans residues Trp-134–Met-154.

The protein belongs to the peptidase A8 family.

The protein localises to the cell inner membrane. The catalysed reaction is Release of signal peptides from bacterial membrane prolipoproteins. Hydrolyzes -Xaa-Yaa-Zaa-|-(S,diacylglyceryl)Cys-, in which Xaa is hydrophobic (preferably Leu), and Yaa (Ala or Ser) and Zaa (Gly or Ala) have small, neutral side chains.. It participates in protein modification; lipoprotein biosynthesis (signal peptide cleavage). Its function is as follows. This protein specifically catalyzes the removal of signal peptides from prolipoproteins. This chain is Lipoprotein signal peptidase, found in Buchnera aphidicola subsp. Acyrthosiphon pisum (strain 5A).